The following is a 233-amino-acid chain: Octanoyltransferase (233 aa).

The BPL/LPL catalytic domain maps to 36–211 (DTTPDEIWLV…EFTRQLGYPT (176 aa)). Residues 75–82 (RGGQVTYH), 142–144 (SLG), and 155–157 (GLA) each bind substrate. Cys-173 serves as the catalytic Acyl-thioester intermediate.

It belongs to the LipB family.

It is found in the cytoplasm. It carries out the reaction octanoyl-[ACP] + L-lysyl-[protein] = N(6)-octanoyl-L-lysyl-[protein] + holo-[ACP] + H(+). It functions in the pathway protein modification; protein lipoylation via endogenous pathway; protein N(6)-(lipoyl)lysine from octanoyl-[acyl-carrier-protein]: step 1/2. Its function is as follows. Catalyzes the transfer of endogenously produced octanoic acid from octanoyl-acyl-carrier-protein onto the lipoyl domains of lipoate-dependent enzymes. Lipoyl-ACP can also act as a substrate although octanoyl-ACP is likely to be the physiological substrate. This Yersinia pseudotuberculosis serotype O:3 (strain YPIII) protein is Octanoyltransferase.